The sequence spans 305 residues: Mitochondrial distribution and morphology protein 12 (305 aa).

Residues 1–236 (MSVEIDWDNI…WPSWIDLDFT (236 aa)) enclose the SMP-LTD domain. The segment at 233–305 (LDFTPEDPED…RVNSNTSLEE (73 aa)) is disordered. Residues 235–248 (FTPEDPEDPEEEGR) show a composition bias toward acidic residues. A compositionally biased stretch (basic and acidic residues) spans 258–269 (NDGKDIEMKSGT). A compositionally biased stretch (polar residues) spans 279–305 (ESVQHVSPAVTSIDQESRVNSNTSLEE).

This sequence belongs to the MDM12 family. As to quaternary structure, component of the ER-mitochondria encounter structure (ERMES) or MDM complex, composed of MMM1, MDM10, MDM12 and MDM34. An MMM1 homodimer associates with one molecule of MDM12 on each side in a pairwise head-to-tail manner, and the SMP-LTD domains of MMM1 and MDM12 generate a continuous hydrophobic tunnel for phospholipid trafficking.

Its subcellular location is the mitochondrion outer membrane. The protein resides in the endoplasmic reticulum membrane. In terms of biological role, component of the ERMES/MDM complex, which serves as a molecular tether to connect the endoplasmic reticulum (ER) and mitochondria. Components of this complex are involved in the control of mitochondrial shape and protein biogenesis, and function in nonvesicular lipid trafficking between the ER and mitochondria. MDM12 is required for the interaction of the ER-resident membrane protein MMM1 and the outer mitochondrial membrane-resident beta-barrel protein MDM10. The MDM12-MMM1 subcomplex functions in the major beta-barrel assembly pathway that is responsible for biogenesis of all mitochondrial outer membrane beta-barrel proteins, and acts in a late step after the SAM complex. The MDM10-MDM12-MMM1 subcomplex further acts in the TOM40-specific pathway after the action of the MDM12-MMM1 complex. Essential for establishing and maintaining the structure of mitochondria and maintenance of mtDNA nucleoids. The protein is Mitochondrial distribution and morphology protein 12 of Kluyveromyces lactis (strain ATCC 8585 / CBS 2359 / DSM 70799 / NBRC 1267 / NRRL Y-1140 / WM37) (Yeast).